The sequence spans 88 residues: Small ribosomal subunit protein uS15 (88 aa).

It belongs to the universal ribosomal protein uS15 family. In terms of assembly, part of the 30S ribosomal subunit. Forms a bridge to the 50S subunit in the 70S ribosome, contacting the 23S rRNA.

Its function is as follows. One of the primary rRNA binding proteins, it binds directly to 16S rRNA where it helps nucleate assembly of the platform of the 30S subunit by binding and bridging several RNA helices of the 16S rRNA. In terms of biological role, forms an intersubunit bridge (bridge B4) with the 23S rRNA of the 50S subunit in the ribosome. This is Small ribosomal subunit protein uS15 from Borrelia hermsii (strain HS1 / DAH).